The following is a 395-amino-acid chain: Acetylornithine aminotransferase (395 aa).

Pyridoxal 5'-phosphate contacts are provided by residues 117–118 and Phe-144; that span reads GA. N(2)-acetyl-L-ornithine is bound at residue Arg-147. 230 to 233 serves as a coordination point for pyridoxal 5'-phosphate; it reads DEVQ. The residue at position 259 (Lys-259) is an N6-(pyridoxal phosphate)lysine. Ser-285 serves as a coordination point for N(2)-acetyl-L-ornithine. Thr-286 is a pyridoxal 5'-phosphate binding site.

It belongs to the class-III pyridoxal-phosphate-dependent aminotransferase family. ArgD subfamily. Homodimer. The cofactor is pyridoxal 5'-phosphate.

It localises to the cytoplasm. The enzyme catalyses N(2)-acetyl-L-ornithine + 2-oxoglutarate = N-acetyl-L-glutamate 5-semialdehyde + L-glutamate. Its pathway is amino-acid biosynthesis; L-arginine biosynthesis; N(2)-acetyl-L-ornithine from L-glutamate: step 4/4. The sequence is that of Acetylornithine aminotransferase from Methanosarcina acetivorans (strain ATCC 35395 / DSM 2834 / JCM 12185 / C2A).